The sequence spans 506 residues: Chorion-specific transcription factor GCMb (506 aa).

Positions 19–174 form a DNA-binding region, GCM; that stretch reads LSWDINDPQM…KSETEARRSA (156 aa). Cysteine 81, cysteine 87, cysteine 91, cysteine 118, cysteine 121, cysteine 130, histidine 157, and histidine 159 together coordinate Zn(2+). Residues 155 to 172 show a composition bias toward basic and acidic residues; the sequence is GVHDHPRPESKSETEARR. The tract at residues 155-213 is disordered; it reads GVHDHPRPESKSETEARRSAIKRQMASFYQPQKKRIRESEAEENQDSSGHFSNIPPLEN. Residues 379–395 are C-terminal conserved inhibitory domain (CCID); that stretch reads LQTVITTTTKVSYQAYQ.

Its subcellular location is the nucleus. Functionally, transcription factor that binds specific sequences on gene promoters and activate their transcription. Through the regulation of gene transcription, may play a role in parathyroid gland development. The polypeptide is Chorion-specific transcription factor GCMb (Homo sapiens (Human)).